The primary structure comprises 84 residues: Gomesin-like peptide (84 aa).

An N-terminal signal peptide occupies residues methionine 1 to alanine 23. At glutamine 24 the chain carries Pyrrolidone carboxylic acid. Disulfide bonds link cysteine 25/cysteine 38 and cysteine 29/cysteine 34. An Arginine amide modification is found at arginine 41. The propeptide occupies glycine 42–arginine 84.

As to expression, expressed by the venom gland.

Its subcellular location is the secreted. Antibacterial peptide. This is Gomesin-like peptide from Hadronyche infensa (Fraser island funnel-web spider).